We begin with the raw amino-acid sequence, 388 residues long: UDP-4-amino-4-deoxy-L-arabinose--oxoglutarate aminotransferase (388 aa).

Residue lysine 183 is modified to N6-(pyridoxal phosphate)lysine.

The protein belongs to the DegT/DnrJ/EryC1 family. ArnB subfamily. As to quaternary structure, homodimer. Pyridoxal 5'-phosphate is required as a cofactor.

It catalyses the reaction UDP-4-amino-4-deoxy-beta-L-arabinose + 2-oxoglutarate = UDP-beta-L-threo-pentopyranos-4-ulose + L-glutamate. It participates in nucleotide-sugar biosynthesis; UDP-4-deoxy-4-formamido-beta-L-arabinose biosynthesis; UDP-4-deoxy-4-formamido-beta-L-arabinose from UDP-alpha-D-glucuronate: step 2/3. The protein operates within bacterial outer membrane biogenesis; lipopolysaccharide biosynthesis. Catalyzes the conversion of UDP-4-keto-arabinose (UDP-Ara4O) to UDP-4-amino-4-deoxy-L-arabinose (UDP-L-Ara4N). The modified arabinose is attached to lipid A and is required for resistance to polymyxin and cationic antimicrobial peptides. This is UDP-4-amino-4-deoxy-L-arabinose--oxoglutarate aminotransferase from Shewanella sediminis (strain HAW-EB3).